The chain runs to 64 residues: Small ribosomal subunit protein eS17 (64 aa).

The protein belongs to the eukaryotic ribosomal protein eS17 family.

This is Small ribosomal subunit protein eS17 from Methanospirillum hungatei JF-1 (strain ATCC 27890 / DSM 864 / NBRC 100397 / JF-1).